The sequence spans 435 residues: Transforming growth factor beta-2 proprotein (435 aa).

A signal peptide spans 1–20 (MHYCVLSAFLLLHLVTVALS). Asn-72, Asn-140, and Asn-241 each carry an N-linked (GlcNAc...) asparagine glycan. 4 cysteine pairs are disulfide-bonded: Cys-309-Cys-318, Cys-317-Cys-380, Cys-346-Cys-411, and Cys-350-Cys-413.

This sequence belongs to the TGF-beta family. In terms of assembly, interacts with the serine proteases, HTRA1 and HTRA3. Interacts with ASPN. Interacts with MFAP5. Interacts with Transforming growth factor beta-2 (TGF-beta-2) chain; interaction is non-covalent and maintains (TGF-beta-2) in a latent state. Interacts with LRRC32/GARP; leading to regulate activation of TGF-beta-2. Interacts with NREP; the interaction results in a decrease in TGFB2 autoinduction. As to quaternary structure, transforming growth factor beta-2: Homodimer; disulfide-linked. Transforming growth factor beta-2: Interacts with TGF-beta receptors (TGFBR1 and TGFBR2), leading to signal transduction. The precursor proprotein is cleaved in the Golgi apparatus to form Transforming growth factor beta-2 (TGF-beta-2) and Latency-associated peptide (LAP) chains, which remain non-covalently linked, rendering TGF-beta-2 inactive.

Its subcellular location is the secreted. The protein localises to the extracellular space. It is found in the extracellular matrix. In terms of biological role, precursor of the Latency-associated peptide (LAP) and Transforming growth factor beta-2 (TGF-beta-2) chains, which constitute the regulatory and active subunit of TGF-beta-2, respectively. Its function is as follows. Required to maintain the Transforming growth factor beta-2 (TGF-beta-2) chain in a latent state during storage in extracellular matrix. Associates non-covalently with TGF-beta-2 and regulates its activation via interaction with 'milieu molecules', such as LTBP1 and LRRC32/GARP, that control activation of TGF-beta-2. Multifunctional protein that regulates various processes such as angiogenesis and heart development. Activation into mature form follows different steps: following cleavage of the proprotein in the Golgi apparatus, Latency-associated peptide (LAP) and Transforming growth factor beta-2 (TGF-beta-2) chains remain non-covalently linked rendering TGF-beta-2 inactive during storage in extracellular matrix. At the same time, LAP chain interacts with 'milieu molecules', such as LTBP1 and LRRC32/GARP, that control activation of TGF-beta-2 and maintain it in a latent state during storage in extracellular milieus. Once activated following release of LAP, TGF-beta-2 acts by binding to TGF-beta receptors (TGFBR1 and TGFBR2), which transduce signal. This chain is Transforming growth factor beta-2 proprotein (TGFB2), found in Sus scrofa (Pig).